The following is a 487-amino-acid chain: UDP-N-acetylmuramate--L-alanine ligase (487 aa).

129–135 (GTHGKTT) contributes to the ATP binding site.

Belongs to the MurCDEF family.

It localises to the cytoplasm. It carries out the reaction UDP-N-acetyl-alpha-D-muramate + L-alanine + ATP = UDP-N-acetyl-alpha-D-muramoyl-L-alanine + ADP + phosphate + H(+). Its pathway is cell wall biogenesis; peptidoglycan biosynthesis. Its function is as follows. Cell wall formation. This Aliivibrio fischeri (strain ATCC 700601 / ES114) (Vibrio fischeri) protein is UDP-N-acetylmuramate--L-alanine ligase.